The following is a 345-amino-acid chain: Mitochondrial substrate carrier family protein J (345 aa).

Residues 1–31 (MSSSHTIQETKEVHTKTNKRIQWDDLDPKRY) lie on the Mitochondrial intermembrane side of the membrane. Solcar repeat units follow at residues 30 to 118 (RYYF…VKQG), 129 to 217 (DLLF…SKSK), and 255 to 342 (EDPI…VKKL). A helical transmembrane segment spans residues 32 to 52 (YFYNFLLGGSIDLLMFPLDVI). The Mitochondrial matrix portion of the chain corresponds to 53–88 (RTRLQVQGSQNVIQSFPQYNGTFDGFKKLIRLEGKR). The chain crosses the membrane as a helical span at residues 89 to 110 (ALYKGFLTSECGYLCSRAIYFG). Over 111 to 129 (SYEFVKQGFLKGRSDSDSD) the chain is Mitochondrial intermembrane. Residues 130 to 150 (LLFVTTISGAISEALASVIWV) form a helical membrane-spanning segment. The Mitochondrial matrix segment spans residues 151-191 (PFDVATQSVQIQGSLSKPKYKGGSDVFKKIYGERGIKGLYK). A helical membrane pass occupies residues 192–208 (GFGATIIRNVPYSGIWW). The Mitochondrial intermembrane portion of the chain corresponds to 209 to 257 (GTYEISKSKLTQFNIRQKLGLKERSSHSLAVSAEIDKNNPSHEVENEDP). The chain crosses the membrane as a helical span at residues 258-278 (IIHFISGFFAAVFATSITNPL). At 279–316 (DVAKTRLQTGVFPENEKPNFYTIIKSTIRKEGIRALWK) the chain is on the mitochondrial matrix side. Residues 317 to 337 (GLVPSLLTSTPYSMISIFLYE) traverse the membrane as a helical segment. Over 338–345 (EVKKLSLK) the chain is Mitochondrial intermembrane.

This sequence belongs to the mitochondrial carrier (TC 2.A.29) family.

Its subcellular location is the mitochondrion inner membrane. Its function is as follows. Mitochondrial solute carriers shuttle metabolites, nucleotides, and cofactors through the mitochondrial inner membrane. This Dictyostelium discoideum (Social amoeba) protein is Mitochondrial substrate carrier family protein J (mcfJ).